The following is a 140-amino-acid chain: Nucleoside diphosphate kinase (140 aa).

Positions 11, 59, 87, 93, 104, and 114 each coordinate ATP. The Pros-phosphohistidine intermediate role is filled by H117.

This sequence belongs to the NDK family. Homotetramer. The cofactor is Mg(2+).

The protein localises to the cytoplasm. The catalysed reaction is a 2'-deoxyribonucleoside 5'-diphosphate + ATP = a 2'-deoxyribonucleoside 5'-triphosphate + ADP. The enzyme catalyses a ribonucleoside 5'-diphosphate + ATP = a ribonucleoside 5'-triphosphate + ADP. In terms of biological role, major role in the synthesis of nucleoside triphosphates other than ATP. The ATP gamma phosphate is transferred to the NDP beta phosphate via a ping-pong mechanism, using a phosphorylated active-site intermediate. This is Nucleoside diphosphate kinase from Rhizorhabdus wittichii (strain DSM 6014 / CCUG 31198 / JCM 15750 / NBRC 105917 / EY 4224 / RW1) (Sphingomonas wittichii).